The chain runs to 698 residues: MSVQDVLWIVLTVQLSFGLAYFENNQRTQDYDVDKNGSVHHKNWVRNEMMDSLGLYWLKWWINANENSIYFEVTVHTRGFAGLGFSKDGRLARADMVLMWVDDATGHPNVLDCHGALHPSSGPPLQDDTQNYDVLDGKQNGTHTILKFKRKIETCDPFDIPLSADTFKVLWSIGENDPIHGNLDWQGQSRGVKALQLFSPMFTKNSHSIEGIQKWDITVNNVTIDRSMDTLYWCKIVRLPELTGKQHIIGYEPLLSGKYERNVVHHMTLFECQSKIYSGSDPSSWDLWVRSAGTVCNSNLLTPRDWDSCSTPVAVWSLGSDGQFLPPHAGIPMGGASGVSYYMLEIHYDNPDGKESVDHSGFRIHYTPNLRTYDSGILISGVSISETQLIPPGQKKYRSVGICGPSCSSVMFPKDGIKIISGTLHSHQAGRTISLRHVRSGKELNPIIVDENYDYRHQKVHQLANETVVLPGDYLITDCSYETKYRKRPTFGGYSTKEEMCLTFITYYPKIEMSGCYSMTPVREFFEMFRVYQFYSLNMTDVENMFLYNSDYTDYSKQAKNATNKPNSGKTSKEDVIYQESLLNKLVISDPAEFHDRTFLSHLNQLPWHDPLFTKRVEQAFITGTHMTFCRVSKDSLSIPSEIIRYPEFTAYVKPPAACLNYLFTDNEELRSGSSQFFTDFTLSLLLLIQLGLQTTLL.

The N-terminal stretch at 1–20 is a signal peptide; the sequence is MSVQDVLWIVLTVQLSFGLA. Asn36, Asn140, and Asn221 each carry an N-linked (GlcNAc...) asparagine glycan. One can recognise a DOMON domain in the interval 54–174; it reads GLYWLKWWIN…DTFKVLWSIG (121 aa). The active site involves Tyr232. Cu cation is bound by residues His265 and His266. Cys272 and Cys309 form a disulfide bridge. Positions 347, 425, and 427 each coordinate Cu cation. 2 disulfide bridges follow: Cys403-Cys516 and Cys479-Cys501. His425 is an active-site residue. Asn465 carries N-linked (GlcNAc...) asparagine glycosylation. Met500 lines the Cu cation pocket. N-linked (GlcNAc...) asparagine glycosylation is found at Asn538 and Asn561.

It belongs to the copper type II ascorbate-dependent monooxygenase family. Requires Cu(2+) as cofactor.

The protein resides in the secreted. The protein is MOXD1 homolog 1 of Drosophila melanogaster (Fruit fly).